Reading from the N-terminus, the 245-residue chain is tRNA1(Val) (adenine(37)-N6)-methyltransferase (245 aa).

The protein belongs to the methyltransferase superfamily. tRNA (adenine-N(6)-)-methyltransferase family.

The protein localises to the cytoplasm. The catalysed reaction is adenosine(37) in tRNA1(Val) + S-adenosyl-L-methionine = N(6)-methyladenosine(37) in tRNA1(Val) + S-adenosyl-L-homocysteine + H(+). Its function is as follows. Specifically methylates the adenine in position 37 of tRNA(1)(Val) (anticodon cmo5UAC). The polypeptide is tRNA1(Val) (adenine(37)-N6)-methyltransferase (Salmonella enteritidis PT4 (strain P125109)).